The chain runs to 557 residues: Organic cation/carnitine transporter 2 (557 aa).

Residues M1 to L20 lie on the Cytoplasmic side of the membrane. Residues I21–F41 form a helical membrane-spanning segment. Residues L42–A142 are Extracellular-facing. 3 N-linked (GlcNAc...) asparagine glycosylation sites follow: N57, N64, and N91. The chain crosses the membrane as a helical span at residues P143–L163. Over S164–V172 the chain is Cytoplasmic. The chain crosses the membrane as a helical span at residues L173–F193. Topologically, residues E194–T197 are extracellular. The chain crosses the membrane as a helical span at residues V198 to G218. Residue G218–S225 participates in ATP binding. Residues T219–T232 lie on the Cytoplasmic side of the membrane. A helical membrane pass occupies residues L233–I253. The Extracellular portion of the chain corresponds to R254–R257. A helical membrane pass occupies residues M258–P278. The Cytoplasmic segment spans residues E279–R341. A helical membrane pass occupies residues V342 to S362. At L363–Y373 the chain is on the extracellular side. Residues V374–L394 traverse the membrane as a helical segment. Topologically, residues Q395–A406 are cytoplasmic. The chain crosses the membrane as a helical span at residues L407 to L427. Residues S428 to A430 lie on the Extracellular side of the membrane. A helical transmembrane segment spans residues L431–A451. Topologically, residues E452–G462 are cytoplasmic. A helical transmembrane segment spans residues V463 to L483. At G484–R488 the chain is on the extracellular side. Position 486 is a phosphotyrosine (Y486). A helical transmembrane segment spans residues F489 to F509. The Cytoplasmic segment spans residues P510 to F557. S548 is modified (phosphoserine). T550 carries the post-translational modification Phosphothreonine.

The protein belongs to the major facilitator (TC 2.A.1) superfamily. Organic cation transporter (TC 2.A.1.19) family. As to quaternary structure, interacts with PDZK1. As to expression, widely expressed. Expressed in kidney, liver and testis. Expressed at the brush border of the small, large intestine and colon (at protein level).

It is found in the apical cell membrane. It localises to the basal cell membrane. The protein localises to the cell membrane. It catalyses the reaction (R)-carnitine(out) + Na(+)(out) = (R)-carnitine(in) + Na(+)(in). The catalysed reaction is glycine betaine(out) + Na(+)(out) = glycine betaine(in) + Na(+)(in). It carries out the reaction glycine betaine(out) + (R)-carnitine(in) = glycine betaine(in) + (R)-carnitine(out). The enzyme catalyses O-butanoyl-(R)-carnitine(out) + Na(+)(out) = O-butanoyl-(R)-carnitine(in) + Na(+)(in). It catalyses the reaction O-acetyl-(R)-carnitine(out) + Na(+)(out) = O-acetyl-(R)-carnitine(in) + Na(+)(in). The catalysed reaction is O-propanoyl-(R)-carnitine(out) + Na(+)(out) = O-propanoyl-(R)-carnitine(in) + Na(+)(in). It carries out the reaction (S)-carnitine(out) + Na(+)(out) = (S)-carnitine(in) + Na(+)(in). The enzyme catalyses an O-acyl-(R)-carnitine(out) + Na(+)(out) = an O-acyl-(R)-carnitine(in) + Na(+)(in). It catalyses the reaction L-glutamyl-L-arginyl-glycyl-L-methionyl-L-threonine(out) + Na(+)(out) = L-glutamyl-L-arginyl-glycyl-L-methionyl-L-threonine(in) + Na(+)(in). The catalysed reaction is N,N-dimethylglycine(out) + Na(+)(out) = N,N-dimethylglycine(in) + Na(+)(in). With respect to regulation, inhibited by emetine, quinidine and verapamil. The IC(50) of emetine is 4.2 uM. Not inhibited by valproic acid. Transport of (R)-carnitine is stimulated by cholesterol in the plasma membrane. Its function is as follows. Sodium-ion dependent, high affinity carnitine transporter. Involved in the active cellular uptake of carnitine. Transports one sodium ion with one molecule of carnitine. Also transports organic cations such as tetraethylammonium (TEA) without the involvement of sodium. Also relative uptake activity ratio of carnitine to TEA is 11.3. May also contribute to regulate the transport of organic compounds in testis across the blood-testis-barrier. This is Organic cation/carnitine transporter 2 from Mus musculus (Mouse).